The following is a 673-amino-acid chain: Fatty acyl-CoA synthetase B (673 aa).

Positions 1–18 (MINNWLAVGLLVVSGILA) are cleaved as a signal peptide. N-linked (GlcNAc...) asparagine glycosylation occurs at Asn-267.

It belongs to the ATP-dependent AMP-binding enzyme family.

Its subcellular location is the endoplasmic reticulum. It carries out the reaction a long-chain fatty acid + ATP + CoA = a long-chain fatty acyl-CoA + AMP + diphosphate. Long chain fatty acid acyl-CoA synthetases catalyze the formation of a thiester bond between a free fatty acid and coenzyme A during fatty acid metabolic process. The sequence is that of Fatty acyl-CoA synthetase B (fcsB) from Dictyostelium discoideum (Social amoeba).